Reading from the N-terminus, the 435-residue chain is Legumain (435 aa).

An N-terminal signal peptide occupies residues 1–17; the sequence is MTWRVAVLLSLVLGAGA. N-linked (GlcNAc...) asparagine glycosylation is present at Asn93. Residue His150 is part of the active site. The N-linked (GlcNAc...) asparagine glycan is linked to Asn169. Residue Cys191 is the Nucleophile of the active site. Residues Asn215, Asn265, and Asn274 are each glycosylated (N-linked (GlcNAc...) asparagine). A propeptide spanning residues 326 to 435 is cleaved from the precursor; sequence NMKESQVLVG…AMDKVCLSHY (110 aa). 2 cysteine pairs are disulfide-bonded: Cys380–Cys414 and Cys392–Cys431.

This sequence belongs to the peptidase C13 family. Homodimer before autocatalytic removal of the propeptide. Monomer after autocatalytic processing. May interact with integrins. Activated by autocatalytic processing at pH 4. As to expression, detected in kidney cortex (at protein level).

It localises to the lysosome. The enzyme catalyses Hydrolysis of proteins and small molecule substrates at -Asn-|-Xaa- bonds.. Its function is as follows. Has a strict specificity for hydrolysis of asparaginyl bonds. Can also cleave aspartyl bonds slowly, especially under acidic conditions. Involved in the processing of proteins for MHC class II antigen presentation in the lysosomal/endosomal system. Also involved in MHC class I antigen presentation in cross-presenting dendritic cells by mediating cleavage and maturation of Perforin-2 (MPEG1), thereby promoting antigen translocation in the cytosol. Required for normal lysosomal protein degradation in renal proximal tubules. Required for normal degradation of internalized EGFR. Plays a role in the regulation of cell proliferation via its role in EGFR degradation. The protein is Legumain (Lgmn) of Rattus norvegicus (Rat).